The chain runs to 418 residues: MNLSRFASRLRMAEEISKTKVGSSSTASVADSSAAASAATNAAKSRWKILWPNSLRWIPTSTDYIIAAEKRLLSILKTPYVQEQVSIGSGPPGSKIRWFRSTSNESRYINTVTFDAKEGAPTLVMVHGYGASQGFFFRNFDALASRFRVIAIDQLGWGGSSRPDFTCRSTEETEAWFIDSFEEWRKAQNLSNFILLGHSFGGYVAAKYALKHPEHVQHLILVGSAGFSAEADAKSEWLTKFRATWKGAVLNHLWESNFTPQKLVRGLGPWGPGLVNRYTTARFGAHSEGTGLTEEEAKLLTDYVYHTLAAKASGELCLKYIFSFGAFARKPLLQSASEWKVPTTFIYGMNDWMNYQGAVEARKSMKVPCEIIRVPQGGHFVFIDNPIGFHSAVLYACRKFISQDSSHDQQLLDGLRLV.

The AB hydrolase-1 domain occupies 121–251 (PTLVMVHGYG…RATWKGAVLN (131 aa)). The short motif at 197–201 (GHSFG) is the GXSXG element. Residues 379–384 (HFVFID) carry the HXXXXD motif motif.

Belongs to the peptidase S33 family. ABHD4/ABHD5 subfamily.

It localises to the cytoplasm. It carries out the reaction a 1-acyl-sn-glycero-3-phosphate + an acyl-CoA = a 1,2-diacyl-sn-glycero-3-phosphate + CoA. Functionally, lysophosphatidic acid acyltransferase which functions in phosphatidic acid biosynthesis. Is highly specific for lysophosphatidic acid and able to use different acyl-CoA donors. May regulate neutral lipid accumulation and participate in the regulation of lipid turnover in vegetative cells. Possesses additional triacylglycerol lipase and phospholipase A2 activities in vitro. Is not active as esterase or lysophospholipase. The polypeptide is 1-acylglycerol-3-phosphate O-acyltransferase (Arabidopsis thaliana (Mouse-ear cress)).